Here is a 458-residue protein sequence, read N- to C-terminus: Cysteine--tRNA ligase (458 aa).

A Zn(2+)-binding site is contributed by Cys-29. The 'HIGH' region signature appears at 31–41 (MTVYDLCHLGH). Zn(2+) is bound by residues Cys-213, His-238, and Glu-242. A 'KMSKS' region motif is present at residues 270 to 274 (KMSKS). Lys-273 contacts ATP.

This sequence belongs to the class-I aminoacyl-tRNA synthetase family. In terms of assembly, monomer. Zn(2+) serves as cofactor.

The protein resides in the cytoplasm. It catalyses the reaction tRNA(Cys) + L-cysteine + ATP = L-cysteinyl-tRNA(Cys) + AMP + diphosphate. This Acidovorax sp. (strain JS42) protein is Cysteine--tRNA ligase.